Reading from the N-terminus, the 124-residue chain is Predicted GPI-anchored protein 11 (124 aa).

An N-terminal signal peptide occupies residues 1–18 (MKFQFVTALALASTMAVA). The disordered stretch occupies residues 38–59 (REGGSTGAELQDNNQPTAGLFG). The GPI-anchor amidated serine moiety is linked to residue Ser-107. Residues 108-124 (GAAGGVGNLFSGILGGL) constitute a propeptide, removed in mature form.

It is found in the cell membrane. The sequence is that of Predicted GPI-anchored protein 11 (PGA11) from Candida albicans (strain SC5314 / ATCC MYA-2876) (Yeast).